The primary structure comprises 113 residues: Large ribosomal subunit protein uL22 (113 aa).

It belongs to the universal ribosomal protein uL22 family. In terms of assembly, part of the 50S ribosomal subunit.

This protein binds specifically to 23S rRNA; its binding is stimulated by other ribosomal proteins, e.g. L4, L17, and L20. It is important during the early stages of 50S assembly. It makes multiple contacts with different domains of the 23S rRNA in the assembled 50S subunit and ribosome. Functionally, the globular domain of the protein is located near the polypeptide exit tunnel on the outside of the subunit, while an extended beta-hairpin is found that lines the wall of the exit tunnel in the center of the 70S ribosome. This Pelotomaculum thermopropionicum (strain DSM 13744 / JCM 10971 / SI) protein is Large ribosomal subunit protein uL22.